Consider the following 206-residue polypeptide: RNA pyrophosphohydrolase (206 aa).

The Nudix hydrolase domain occupies 6-150; it reads GYRPNVGIVI…KRDVYRKVMK (145 aa). Residues 38 to 59 carry the Nudix box motif; the sequence is GGINEGENIETAMYRELYEEVG. Residues 162–191 show a composition bias toward basic and acidic residues; the sequence is KPETVEKPRVERTEKRDFQKRDNQKREFRK. A disordered region spans residues 162-206; it reads KPETVEKPRVERTEKRDFQKRDNQKREFRKSARMWNNSHQKGKAQ.

The protein belongs to the Nudix hydrolase family. RppH subfamily. The cofactor is a divalent metal cation.

Its function is as follows. Accelerates the degradation of transcripts by removing pyrophosphate from the 5'-end of triphosphorylated RNA, leading to a more labile monophosphorylated state that can stimulate subsequent ribonuclease cleavage. The sequence is that of RNA pyrophosphohydrolase from Actinobacillus pleuropneumoniae serotype 7 (strain AP76).